Here is a 1764-residue protein sequence, read N- to C-terminus: Latent-transforming growth factor beta-binding protein 2 (1764 aa).

Positions 1–35 are cleaved as a signal peptide; it reads MRAPTTVRCSGRIQRARWRGFLPLVLALLMGTSHA. Residues 80-140 form a disordered region; it reads PGLSPSEWNQ…PPAARTAHSV (61 aa). The interval 94–115 is heparin-binding; the sequence is IPGRLAEAEARRPSRAQQLRRV. The span at 108–128 shows a compositional bias: polar residues; sequence RAQQLRRVQSPVQTRRSNPRG. N-linked (GlcNAc...) asparagine glycosylation is present at Asn-175. In terms of domain architecture, EGF-like 1 spans 181-213; it reads IKPVCQPPCQNRGSCSRPQLCICRSGFRGARCE. Disulfide bonds link Cys-185–Cys-195, Cys-189–Cys-201, and Cys-203–Cys-212. Positions 220–279 are disordered; that stretch reads EFDPQNARPVPRRSVEGAPGPHRSSEARGSLVTRIQPLLPPLPPPPSRTLSQTRPLQQHA. A heparin-binding region spans residues 226–243; that stretch reads ARPVPRRSVEGAPGPHRS. Pro residues predominate over residues 257–266; sequence LLPPLPPPPS. Asn-330 is a glycosylation site (N-linked (GlcNAc...) asparagine). 331–341 is a binding site for heparin; the sequence is LTEKIKKIKVV. Residues 383-415 enclose the EGF-like 2 domain; sequence RIYFCQIPCLNGGRCIGRDECWCPANSTGKFCH. 3 disulfides stabilise this stretch: Cys-387/Cys-397, Cys-391/Cys-403, and Cys-405/Cys-414. An N-linked (GlcNAc...) asparagine glycan is attached at Asn-408. A disordered region spans residues 484–529; sequence EVDPVPEDNSVETRASHRPHGSSGHSHWASNSIPARAGEAPRPPPV. A Phosphoserine modification is found at Ser-493. The region spanning 538–590 is the TB 1 domain; sequence GQCYLSTVNGQCANPLGELTSQEDCCGSVGTSWGVTSCAPCPPRPAFPVIENG. Disulfide bonds link Cys-540–Cys-562, Cys-549–Cys-575, and Cys-563–Cys-578. Asn-602 carries an N-linked (GlcNAc...) asparagine glycan. In terms of domain architecture, EGF-like 3; calcium-binding spans 608–648; it reads DINECLTLGLCKDSECVNTRGSYLCTCRPGLMLDPSRSRCV. Cystine bridges form between Cys-612/Cys-623, Cys-618/Cys-632, Cys-634/Cys-647, Cys-660/Cys-682, Cys-669/Cys-695, Cys-683/Cys-698, and Cys-684/Cys-710. The 53-residue stretch at 658–710 folds into the TB 2 domain; it reads GLCYRSMVSGTCTLPLVQRITKQICCCSRVGKAWGSKCEHCPLPGTEAFREIC. Disordered regions lie at residues 729-759 and 786-809; these read KAEE…RQPL and SAPH…LPGQ. Residues 834-876 form the EGF-like 4 domain; it reads GFDPCFAGASNICGPGTCVKLPNGYRCVCSPGYQLHPSQDYCT. Cystine bridges form between Cys-838-Cys-851, Cys-846-Cys-860, Cys-862-Cys-875, Cys-881-Cys-892, Cys-886-Cys-901, Cys-903-Cys-918, Cys-924-Cys-935, Cys-930-Cys-944, Cys-946-Cys-958, Cys-964-Cys-975, Cys-970-Cys-984, Cys-987-Cys-998, Cys-1004-Cys-1015, Cys-1010-Cys-1024, Cys-1026-Cys-1039, Cys-1045-Cys-1056, Cys-1051-Cys-1065, Cys-1068-Cys-1081, Cys-1087-Cys-1098, Cys-1093-Cys-1107, Cys-1110-Cys-1123, Cys-1129-Cys-1141, Cys-1136-Cys-1150, Cys-1152-Cys-1164, Cys-1170-Cys-1182, Cys-1176-Cys-1191, Cys-1193-Cys-1206, Cys-1212-Cys-1223, Cys-1218-Cys-1232, Cys-1234-Cys-1247, Cys-1253-Cys-1265, Cys-1259-Cys-1274, Cys-1276-Cys-1289, Cys-1295-Cys-1307, Cys-1302-Cys-1316, Cys-1318-Cys-1332, Cys-1359-Cys-1382, Cys-1369-Cys-1394, Cys-1383-Cys-1397, Cys-1435-Cys-1448, Cys-1443-Cys-1457, Cys-1459-Cys-1472, Cys-1478-Cys-1488, Cys-1483-Cys-1497, and Cys-1499-Cys-1512. Residues 877–919 enclose the EGF-like 5; calcium-binding domain; it reads DDNECLRNPCEGRGRCVNSVGSYSCLCYPGYTLATLGDTQECQ. In terms of domain architecture, EGF-like 6; calcium-binding spans 920 to 959; the sequence is DVDECEQPGVCSGGRCSNTEGSYHCECDQGYVMVRRGHCQ. Residues 960–999 form the EGF-like 7; calcium-binding domain; the sequence is DINECRHPGTCPDGRCVNSPGSYTCLACEEGYIGQSGNCV. The EGF-like 8; calcium-binding domain occupies 1000–1040; the sequence is DMNECLTPGICAHGRCINMEGSFRCSCEPGYELTPDKKGCR. The 42-residue stretch at 1041–1082 folds into the EGF-like 9; calcium-binding domain; sequence DVDECASRASCPTGLCLNTEGSFTCSACQSGYWVNEDGTACE. Positions 1083–1124 constitute an EGF-like 10; calcium-binding domain; that stretch reads DLDECAFPGVCPTGVCTNTVGSFSCKDCDRGFRPSPLGNSCE. Positions 1125 to 1165 constitute an EGF-like 11; calcium-binding domain; that stretch reads DVDECEGPQNSCLGGECKNTDGSYQCLCPQGFQLANGTVCE. A glycan (N-linked (GlcNAc...) asparagine) is linked at Asn-1160. Residues 1166–1207 form the EGF-like 12; calcium-binding domain; that stretch reads DVDECVGEEHCAPHGECLNSPGSFFCLCAPGFASAEGGTRCQ. The region spanning 1208 to 1248 is the EGF-like 13; calcium-binding domain; sequence DVDECATTEPCLGGHCVNTEGSFNCLCETGFQPAPDSGECV. The region spanning 1249–1290 is the EGF-like 15; calcium-binding domain; sequence DIDECANDTVCGNHGFCDNTDGSFRCLCDQGFETSPSGWECV. Asn-1255 carries N-linked (GlcNAc...) asparagine glycosylation. One can recognise an EGF-like 16; calcium-binding domain in the interval 1291 to 1333; sequence DVNECELMLAVCGDALCENVEGSFLCLCASDLEEYDAEEGHCR. In terms of domain architecture, TB 3 spans 1357–1409; it reads MECYAEHNGGPPCSQILGQNSTQAECCSTQGARWGETCDPCPSEDSVEFSELC. Asn-1376 carries an N-linked (GlcNAc...) asparagine glycan. The 43-residue stretch at 1431 to 1473 folds into the EGF-like 17; calcium-binding domain; the sequence is DADECILFGPALCQNGRCLNTVPGYICLCNPGYHYDAVSRKCQ. Residues 1474-1513 form the EGF-like 18; calcium-binding domain; sequence DHNECQDLACENGECVNTEGSFHCFCSPPLILDLSGQRCV. A glycan (N-linked (GlcNAc...) asparagine) is linked at Asn-1514. The 53-residue stretch at 1530–1582 folds into the TB 4 domain; sequence DICWKKVTNDVCSQPLRGHHTTYTECCCQDGEAWSQQCALCPPRSSEVYAQLC. Disulfide bonds link Cys-1532–Cys-1555, Cys-1541–Cys-1567, Cys-1556–Cys-1570, Cys-1557–Cys-1582, Cys-1680–Cys-1691, Cys-1686–Cys-1700, Cys-1702–Cys-1715, Cys-1721–Cys-1736, Cys-1731–Cys-1745, and Cys-1747–Cys-1760. Positions 1585–1764 are C-terminal domain; the sequence is ARIEAEREAG…PGPPHCAAKE (180 aa). In terms of domain architecture, EGF-like 19; calcium-binding spans 1676 to 1716; that stretch reads QAEECGILNGCENGRCVRVREGYTCDCFEGFQLDTALMACV. Residues 1717–1761 form the EGF-like 20; calcium-binding domain; that stretch reads DVNECEDLNGAARLCAHGHCENTEGSYRCHCSPGYVAEPGPPHCA.

The protein belongs to the LTBP family. As to quaternary structure, forms part of the large latent transforming growth factor beta precursor complex; removal is essential for activation of complex. Interacts with SDC4. Interacts (via C-terminal domain) with FBN1 (via N-terminal domain) in a Ca(+2)-dependent manner. N-Glycosylated. In terms of processing, contains hydroxylated asparagine residues. In terms of tissue distribution, expressed in cortical astrocytes and glioma cells. Expression is up-regulated by TGFB1.

The protein resides in the secreted. It localises to the extracellular space. Its subcellular location is the extracellular matrix. May play an integral structural role in elastic-fiber architectural organization and/or assembly. This chain is Latent-transforming growth factor beta-binding protein 2 (Ltbp2), found in Rattus norvegicus (Rat).